Here is a 151-residue protein sequence, read N- to C-terminus: MYPAHLLVLLAVCVSLLGAASIPARPLNLYQFGNMIQCANHGRRPTWHYMDYGCYCGKGGSGTPVDELDRCCQTHDDCYGEAEKLPACNYMMSGPYYNTYSYECNDGELTCKDNNDECKAFICNCDRTAAICFARTPYNDANWNINTKTSC.

The N-terminal stretch at 1 to 27 is a signal peptide; sequence MYPAHLLVLLAVCVSLLGAASIPARPL. Cystine bridges form between Cys-38/Cys-104, Cys-54/Cys-151, Cys-56/Cys-72, Cys-71/Cys-132, Cys-78/Cys-125, Cys-88/Cys-118, and Cys-111/Cys-123. Residues Tyr-55, Gly-57, and Gly-59 each coordinate Ca(2+). The active site involves His-75. Asp-76 lines the Ca(2+) pocket. The active site involves Asp-126.

This sequence belongs to the phospholipase A2 family. Group I subfamily. D49 sub-subfamily. Requires Ca(2+) as cofactor. Expressed by the venom gland.

Its subcellular location is the secreted. The enzyme catalyses a 1,2-diacyl-sn-glycero-3-phosphocholine + H2O = a 1-acyl-sn-glycero-3-phosphocholine + a fatty acid + H(+). Functionally, PLA2 catalyzes the calcium-dependent hydrolysis of the 2-acyl groups in 3-sn-phosphoglycerides. This is Acidic phospholipase A2 5 from Tropidechis carinatus (Australian rough-scaled snake).